The sequence spans 656 residues: Putative cysteine-rich receptor-like protein kinase 32 (656 aa).

Residues 1-23 form the signal peptide; it reads MCLQNLLSILCFVLAISFGYVSA. 2 consecutive Gnk2-homologous domains span residues 24–126 and 134–238; these read QKCV…NSSF and PTMV…GSEY. At 24 to 262 the chain is on the extracellular side; that stretch reads QKCVDSMFFR…PDGKTISTGA (239 aa). Residues N35, N52, N61, N103, and N123 are each glycosylated (N-linked (GlcNAc...) asparagine). Residues 263–283 traverse the membrane as a helical segment; the sequence is IVAVVVSVVIFVVLLALVLVI. Residues 284 to 656 lie on the Cytoplasmic side of the membrane; sequence RKRRQSYKTL…SASITRVTPR (373 aa). Positions 321-606 constitute a Protein kinase domain; that stretch reads FSRNNKLGKG…IFQMLTNSSI (286 aa). Residues 327-335 and K349 contribute to the ATP site; that span reads LGKGGFGEV. Y394 carries the phosphotyrosine modification. The active-site Proton acceptor is the D454. S458 is modified (phosphoserine). T494 bears the Phosphothreonine mark. Phosphotyrosine is present on Y502.

Belongs to the protein kinase superfamily. Ser/Thr protein kinase family. CRK subfamily.

The protein localises to the membrane. It carries out the reaction L-seryl-[protein] + ATP = O-phospho-L-seryl-[protein] + ADP + H(+). It catalyses the reaction L-threonyl-[protein] + ATP = O-phospho-L-threonyl-[protein] + ADP + H(+). The sequence is that of Putative cysteine-rich receptor-like protein kinase 32 (CRK32) from Arabidopsis thaliana (Mouse-ear cress).